We begin with the raw amino-acid sequence, 85 residues long: RDS3 complex subunit 10 (85 aa).

Belongs to the SF3b complex composed of CUS1, HSH49, HSH155, RCP1, RDS3 and RSE1.

The protein localises to the nucleus. Its function is as follows. Involved in pre-mRNA splicing. Required for the SF3b integrity and prespliceosome assembly. This Saccharomyces cerevisiae (strain ATCC 204508 / S288c) (Baker's yeast) protein is RDS3 complex subunit 10 (YSF3).